A 213-amino-acid chain; its full sequence is Probable nicotinate-nucleotide adenylyltransferase (213 aa).

The protein belongs to the NadD family.

It carries out the reaction nicotinate beta-D-ribonucleotide + ATP + H(+) = deamido-NAD(+) + diphosphate. It participates in cofactor biosynthesis; NAD(+) biosynthesis; deamido-NAD(+) from nicotinate D-ribonucleotide: step 1/1. Its function is as follows. Catalyzes the reversible adenylation of nicotinate mononucleotide (NaMN) to nicotinic acid adenine dinucleotide (NaAD). This Shigella boydii serotype 4 (strain Sb227) protein is Probable nicotinate-nucleotide adenylyltransferase.